The primary structure comprises 801 residues: Triacylglycerol lipase SDP1L (801 aa).

Asn130 is a glycosylation site (N-linked (GlcNAc...) asparagine). Helical transmembrane passes span 232 to 249 (ALLLSGGASLGAFHLGVV) and 261 to 277 (IIAGSSVGSVMCAVVGT). The region spanning 233–436 (LLLSGGASLG…EMDLPMIQLK (204 aa)) is the PNPLA domain. The short motif at 264–268 (GSSVG) is the GXSXG element. Ser266 functions as the Nucleophile in the catalytic mechanism. Asn328 and Asn332 each carry an N-linked (GlcNAc...) asparagine glycan. Catalysis depends on Asp423, which acts as the Proton acceptor. 6 N-linked (GlcNAc...) asparagine glycosylation sites follow: Asn605, Asn620, Asn649, Asn653, Asn708, and Asn759. Residues 648-675 (SNRTSNLSHTYDAGSECDSPEAEDWTRS) are disordered. The disordered stretch occupies residues 750-801 (MNSEPEDSQNESEIPETPESVQLDSPEKDIIDGESSASEDGDAQANLIHDHE). Residues 753-765 (EPEDSQNESEIPE) are compositionally biased toward acidic residues.

In terms of tissue distribution, highly expressed in mature pollen.

The protein resides in the lipid droplet. Its subcellular location is the membrane. The catalysed reaction is a triacylglycerol + H2O = a diacylglycerol + a fatty acid + H(+). Functionally, may be involved in the release of fatty acids from the oil body in germinating seedlings. Can hydrolyze triacylglycerols in vitro. The chain is Triacylglycerol lipase SDP1L from Arabidopsis thaliana (Mouse-ear cress).